Reading from the N-terminus, the 195-residue chain is MIPLVLEESGGSERVFDIYSRLLRERIIFLGEQVTSETANRIVAQLLFLEAEDPDKDIYMYINSPGGSVYDGLGIFDTMQHVKPDIHTVCVGLAASMGAFLLAAGTKGKRSSLRHSRIMIHQPLGGARGQASDIRIQADEILFLKERLNTELSERTGKDYETIKEDTDRDFYMSPSEAVEYGLIDLVLDKKPVKV.

Ser96 acts as the Nucleophile in catalysis. Residue His121 is part of the active site.

This sequence belongs to the peptidase S14 family. Fourteen ClpP subunits assemble into 2 heptameric rings which stack back to back to give a disk-like structure with a central cavity, resembling the structure of eukaryotic proteasomes.

Its subcellular location is the cytoplasm. The enzyme catalyses Hydrolysis of proteins to small peptides in the presence of ATP and magnesium. alpha-casein is the usual test substrate. In the absence of ATP, only oligopeptides shorter than five residues are hydrolyzed (such as succinyl-Leu-Tyr-|-NHMec, and Leu-Tyr-Leu-|-Tyr-Trp, in which cleavage of the -Tyr-|-Leu- and -Tyr-|-Trp bonds also occurs).. Functionally, cleaves peptides in various proteins in a process that requires ATP hydrolysis. Has a chymotrypsin-like activity. Plays a major role in the degradation of misfolded proteins. The polypeptide is ATP-dependent Clp protease proteolytic subunit 1 (Prochlorococcus marinus (strain MIT 9312)).